The primary structure comprises 76 residues: DNA-binding protein S1FA2 (76 aa).

A Nuclear localization signal motif is present at residues 50-55 (PPRKKK). Positions 51–66 (PRKKKPLSKKKLKREK) are enriched in basic residues. The tract at residues 51 to 76 (PRKKKPLSKKKLKREKLKQGVPVPGE) is disordered.

The protein belongs to the S1FA transcription factor family.

The protein resides in the nucleus. Its function is as follows. DNA-binding protein that specifically recognizes a negative element (S1F) within the RPS1 promoter. In Arabidopsis thaliana (Mouse-ear cress), this protein is DNA-binding protein S1FA2 (S1FA2).